The primary structure comprises 352 residues: Nodal homolog 4-B (352 aa).

The first 18 residues, 1 to 18 (MHLYFSCFILLFVPGGKS), serve as a signal peptide directing secretion. The propeptide occupies 19-278 (LGINSHLKHM…TIANSRRHRR (260 aa)). Residues asparagine 30, asparagine 37, asparagine 199, and asparagine 238 are each glycosylated (N-linked (GlcNAc...) asparagine). Positions 197-223 (GKNHSEGHMKQPKKLHRAKSAERRYQQ) are disordered.

The protein belongs to the TGF-beta family. As to quaternary structure, homodimer; disulfide-linked.

The protein resides in the secreted. Functionally, cooperation and regulatory loops of multiple nodals are essential for mesendoderm patterning in early embryos. Plays a role in mesoderm formation and may be required for neural development. The sequence is that of Nodal homolog 4-B (nodal4-b) from Xenopus laevis (African clawed frog).